The chain runs to 72 residues: Osmotically-inducible lipoprotein B (72 aa).

Positions 1-23 (MFVTSKKMTAAVLAITLAMSLSA) are cleaved as a signal peptide. A lipid anchor (N-palmitoyl cysteine) is attached at Cys-24. Cys-24 is lipidated: S-diacylglycerol cysteine.

It localises to the cell membrane. Functionally, provides resistance to osmotic stress. May be important for stationary-phase survival. The sequence is that of Osmotically-inducible lipoprotein B (osmB) from Escherichia coli O157:H7.